The following is a 468-amino-acid chain: ATP synthase subunit beta (468 aa).

An ATP-binding site is contributed by 155-162; that stretch reads GGAGVGKT.

It belongs to the ATPase alpha/beta chains family. As to quaternary structure, F-type ATPases have 2 components, CF(1) - the catalytic core - and CF(0) - the membrane proton channel. CF(1) has five subunits: alpha(3), beta(3), gamma(1), delta(1), epsilon(1). CF(0) has three main subunits: a(1), b(2) and c(9-12). The alpha and beta chains form an alternating ring which encloses part of the gamma chain. CF(1) is attached to CF(0) by a central stalk formed by the gamma and epsilon chains, while a peripheral stalk is formed by the delta and b chains.

The protein resides in the cell membrane. It catalyses the reaction ATP + H2O + 4 H(+)(in) = ADP + phosphate + 5 H(+)(out). In terms of biological role, produces ATP from ADP in the presence of a proton gradient across the membrane. The catalytic sites are hosted primarily by the beta subunits. This Streptococcus pyogenes serotype M1 protein is ATP synthase subunit beta.